An 856-amino-acid polypeptide reads, in one-letter code: FO synthase (856 aa).

2 Radical SAM core domains span residues 84–336 (ISYS…APPN) and 544–785 (VTFV…SHIQ). Positions 85–417 (SYSRKVFIPV…PRVRGHVVAL (333 aa)) are cofG-like. [4Fe-4S] cluster contacts are provided by Cys98, Cys102, Cys105, Cys558, Cys562, and Cys565. A cofH-like region spans residues 521-854 (DGPALEAVAA…RQRTTTYALL (334 aa)).

This sequence in the N-terminal section; belongs to the radical SAM superfamily. CofG family. The protein in the C-terminal section; belongs to the radical SAM superfamily. CofH family. Requires [4Fe-4S] cluster as cofactor.

It catalyses the reaction 5-amino-6-(D-ribitylamino)uracil + L-tyrosine + S-adenosyl-L-methionine = 5-amino-5-(4-hydroxybenzyl)-6-(D-ribitylimino)-5,6-dihydrouracil + 2-iminoacetate + 5'-deoxyadenosine + L-methionine + H(+). The catalysed reaction is 5-amino-5-(4-hydroxybenzyl)-6-(D-ribitylimino)-5,6-dihydrouracil + S-adenosyl-L-methionine = 7,8-didemethyl-8-hydroxy-5-deazariboflavin + 5'-deoxyadenosine + L-methionine + NH4(+) + H(+). Its pathway is cofactor biosynthesis; coenzyme F0 biosynthesis. Its function is as follows. Catalyzes the radical-mediated synthesis of 7,8-didemethyl-8-hydroxy-5-deazariboflavin (FO) from 5-amino-6-(D-ribitylamino)uracil and L-tyrosine. The protein is FO synthase (fbiC) of Mycobacterium bovis (strain ATCC BAA-935 / AF2122/97).